Reading from the N-terminus, the 352-residue chain is Homocitrate synthase, omega subunit (352 aa).

It belongs to the alpha-IPM synthase/homocitrate synthase family. In terms of assembly, heterodimer of an alpha and an omega chain.

It carries out the reaction acetyl-CoA + 2-oxoglutarate + H2O = (2R)-homocitrate + CoA + H(+). Functionally, this protein is a Fe-Mo-cofactor biosynthetic component. The protein is Homocitrate synthase, omega subunit (nifV-OMEGA) of Clostridium pasteurianum.